We begin with the raw amino-acid sequence, 359 residues long: Guanine nucleotide-binding protein G(q) subunit alpha (359 aa).

2 S-palmitoyl cysteine lipidation sites follow: C9 and C10. Residues 38-359 (RELKLLLLGT…QLNLKEYNLV (322 aa)) enclose the G-alpha domain. The interval 41–54 (KLLLLGTGESGKST) is G1 motif. Residues S50, G51, K52, S53, T54, S156, L180, R181, and R183 each coordinate GTP. S53 lines the Mg(2+) pocket. Residues 178–186 (DVLRVRVPT) are G2 motif. T186 contacts Mg(2+). A G3 motif region spans residues 201–210 (FRMVDVGGQR). A 5-glutamyl histamine modification is found at Q209. Residues 270–277 (ILFLNKKD) are G4 motif. GTP is bound by residues N274, K275, D277, and A331. The segment at 329-334 (TCATDT) is G5 motif.

It belongs to the G-alpha family. G(q) subfamily. In terms of assembly, g proteins are composed of 3 units; alpha, beta and gamma. The alpha chain contains the guanine nucleotide binding site. Interacts (GDP-bound form) with RIC8A (via C-terminus); promoting GNAQ folding and association with the plasma membrane. Binds NHERF1. Forms a complex with PECAM1 and BDKRB2. Interacts with GAS2L2. In terms of processing, palmitoylated by ZDHHC3 and ZDHHC7. Palmitoylation occurs in the Golgi and participates in the localization of GNAQ to the plasma membrane. Post-translationally, histaminylated at Gln-209 residues by TGM2.

The protein resides in the cell membrane. It localises to the golgi apparatus. Its subcellular location is the nucleus. The protein localises to the nucleus membrane. The enzyme catalyses GTP + H2O = GDP + phosphate + H(+). In terms of biological role, guanine nucleotide-binding proteins (G proteins) function as transducers downstream of G protein-coupled receptors (GPCRs) in numerous signaling cascades. The alpha chain contains the guanine nucleotide binding site and alternates between an active, GTP-bound state and an inactive, GDP-bound state. Signaling by an activated GPCR promotes GDP release and GTP binding. The alpha subunit has a low GTPase activity that converts bound GTP to GDP, thereby terminating the signal. Both GDP release and GTP hydrolysis are modulated by numerous regulatory proteins. Signaling is mediated via phospholipase C-beta-dependent inositol lipid hydrolysis for signal propagation: activates phospholipase C-beta: following GPCR activation, GNAQ activates PLC-beta (PLCB1, PLCB2, PLCB3 or PLCB4), leading to production of diacylglycerol (DAG) and inositol 1,4,5-trisphosphate (IP3). Required for platelet activation. Regulates B-cell selection and survival and is required to prevent B-cell-dependent autoimmunity. Regulates chemotaxis of BM-derived neutrophils and dendritic cells (in vitro). Transduces FFAR4 signaling in response to long-chain fatty acids (LCFAs). Together with GNA11, required for heart development. This is Guanine nucleotide-binding protein G(q) subunit alpha (Gnaq) from Mus musculus (Mouse).